Consider the following 173-residue polypeptide: Small ribosomal subunit protein uS5 (173 aa).

The S5 DRBM domain maps to 17 to 80; it reads WQERVIQIRR…ADGKKQLIEV (64 aa).

This sequence belongs to the universal ribosomal protein uS5 family. In terms of assembly, part of the 30S ribosomal subunit. Contacts proteins S4 and S8.

With S4 and S12 plays an important role in translational accuracy. Functionally, located at the back of the 30S subunit body where it stabilizes the conformation of the head with respect to the body. The polypeptide is Small ribosomal subunit protein uS5 (Gloeothece citriformis (strain PCC 7424) (Cyanothece sp. (strain PCC 7424))).